A 325-amino-acid chain; its full sequence is Putative [LysW]-lysine/[LysW]-ornithine hydrolase (325 aa).

H66 serves as a coordination point for Zn(2+). D68 is an active-site residue. D90 contacts Zn(2+). The Proton acceptor role is filled by E117. Zn(2+)-binding residues include E118, E139, and H297.

This sequence belongs to the peptidase M20A family. LysK subfamily. Requires Zn(2+) as cofactor. Co(2+) serves as cofactor.

It localises to the cytoplasm. The enzyme catalyses [amino-group carrier protein]-C-terminal-gamma-(L-lysyl)-L-glutamate + H2O = [amino-group carrier protein]-C-terminal-L-glutamate + L-lysine. It carries out the reaction [amino-group carrier protein]-C-terminal-gamma-(L-ornithyl)-L-glutamate + H2O = [amino-group carrier protein]-C-terminal-L-glutamate + L-ornithine. It functions in the pathway amino-acid biosynthesis; L-lysine biosynthesis via AAA pathway; L-lysine from L-alpha-aminoadipate (Thermus route): step 5/5. Its pathway is amino-acid biosynthesis; L-arginine biosynthesis. Catalyzes the release of L-lysine from [LysW]-gamma-L-lysine and the release of L-ornithine from [LysW]-L-ornithine. The protein is Putative [LysW]-lysine/[LysW]-ornithine hydrolase of Pyrococcus horikoshii (strain ATCC 700860 / DSM 12428 / JCM 9974 / NBRC 100139 / OT-3).